The sequence spans 427 residues: Serine hydroxymethyltransferase (427 aa).

(6S)-5,6,7,8-tetrahydrofolate contacts are provided by residues L124 and 128–130 (GHL). K233 is modified (N6-(pyridoxal phosphate)lysine).

It belongs to the SHMT family. In terms of assembly, homodimer. Requires pyridoxal 5'-phosphate as cofactor.

The protein resides in the cytoplasm. The catalysed reaction is (6R)-5,10-methylene-5,6,7,8-tetrahydrofolate + glycine + H2O = (6S)-5,6,7,8-tetrahydrofolate + L-serine. It participates in one-carbon metabolism; tetrahydrofolate interconversion. The protein operates within amino-acid biosynthesis; glycine biosynthesis; glycine from L-serine: step 1/1. Functionally, catalyzes the reversible interconversion of serine and glycine with tetrahydrofolate (THF) serving as the one-carbon carrier. This reaction serves as the major source of one-carbon groups required for the biosynthesis of purines, thymidylate, methionine, and other important biomolecules. Also exhibits THF-independent aldolase activity toward beta-hydroxyamino acids, producing glycine and aldehydes, via a retro-aldol mechanism. This chain is Serine hydroxymethyltransferase, found in Acidothermus cellulolyticus (strain ATCC 43068 / DSM 8971 / 11B).